The sequence spans 485 residues: Ribulose bisphosphate carboxylase large chain (485 aa).

Residues 1–2 (MS) constitute a propeptide that is removed on maturation. At Pro-3 the chain carries N-acetylproline. N6,N6,N6-trimethyllysine is present on Lys-14. 2 residues coordinate substrate: Asn-123 and Thr-173. Lys-175 acts as the Proton acceptor in catalysis. Lys-177 contributes to the substrate binding site. Lys-201, Asp-203, and Glu-204 together coordinate Mg(2+). Position 201 is an N6-carboxylysine (Lys-201). His-294 acts as the Proton acceptor in catalysis. Substrate is bound by residues Arg-295, His-327, and Ser-379.

The protein belongs to the RuBisCO large chain family. Type I subfamily. As to quaternary structure, heterohexadecamer of 8 large chains and 8 small chains; disulfide-linked. The disulfide link is formed within the large subunit homodimers. Mg(2+) serves as cofactor. In terms of processing, the disulfide bond which can form in the large chain dimeric partners within the hexadecamer appears to be associated with oxidative stress and protein turnover.

The protein localises to the plastid. The protein resides in the chloroplast. It catalyses the reaction 2 (2R)-3-phosphoglycerate + 2 H(+) = D-ribulose 1,5-bisphosphate + CO2 + H2O. It carries out the reaction D-ribulose 1,5-bisphosphate + O2 = 2-phosphoglycolate + (2R)-3-phosphoglycerate + 2 H(+). In terms of biological role, ruBisCO catalyzes two reactions: the carboxylation of D-ribulose 1,5-bisphosphate, the primary event in carbon dioxide fixation, as well as the oxidative fragmentation of the pentose substrate in the photorespiration process. Both reactions occur simultaneously and in competition at the same active site. The chain is Ribulose bisphosphate carboxylase large chain from Bartlettina sordida (Purple torch).